A 199-amino-acid chain; its full sequence is COMM domain-containing protein 2 (199 aa).

Residues 123-190 (SYHNLEWRLD…QALEEMKTNH (68 aa)) form the COMM domain.

It belongs to the COMM domain-containing protein 2 family. Component of the commander complex consisting of the CCC subcomplex and the retriever subcomplex. Component of the CCC (COMMD/CCDC22/CCDC93) subcomplex consisting of COMMD1, COMMD2, COMMD3, COMMD4, COMMD5, COMMD6, COMMD7, COMMD8, COMMD9, COMMD10, CCDC22 and CCDC93; within the complex forms a heterodimer with COMMD3. Interacts with RELA, RELB, NFKB1/p105, NFKB2/p100. Interacts with CCDC22, CCDC93, SCNN1B, CUL3, CUL4B, CUL5, CUL7. Ubiquitous.

Its subcellular location is the cytoplasm. In terms of biological role, scaffold protein in the commander complex that is essential for endosomal recycling of transmembrane cargos; the commander complex is composed of the CCC subcomplex and the retriever subcomplex. May modulate activity of cullin-RING E3 ubiquitin ligase (CRL) complexes. May down-regulate activation of NF-kappa-B. This chain is COMM domain-containing protein 2 (COMMD2), found in Homo sapiens (Human).